Here is a 714-residue protein sequence, read N- to C-terminus: ABC transporter B family member 28 (714 aa).

5 helical membrane passes run 109-129 (LSVC…MPVF), 161-181 (IFTI…MAIL), 240-260 (ICIL…LMLA), 340-360 (VAVY…VKTG), and 361-381 (ELAV…TFAV). An ABC transmembrane type-1 domain is found at 109 to 393 (LSVCLLTLLG…LVNTFGDLRG (285 aa)). Residues 470–708 (VCLDDVHFAY…KGSYASLVGT (239 aa)) enclose the ABC transporter domain. An ATP-binding site is contributed by 505 to 512 (GSSGAGKS).

This sequence belongs to the ABC transporter superfamily. ABCB family. Multidrug resistance exporter (TC 3.A.1.201) subfamily.

It is found in the membrane. The protein is ABC transporter B family member 28 (ABCB28) of Arabidopsis thaliana (Mouse-ear cress).